A 225-amino-acid chain; its full sequence is MVMAEGTAVLRRNRPGTKAQDFYNWPDESFDEMDSTLAVQQYIQQNIRADCSNIDKILEPPEGQDEGVWKYEHLRQFCLELNGLAVKLQSECHPDTCTQMTATEQWIFLCAAHKTPKECPAIDYTRHTLDGAACLLNSNKYFPSRVSIKESSVAKLGSVCRRIYRIFSHAYFHHRQIFDEYENETFLCHRFTKFVMKYNLMSKDNLIVPILEEEVQNSVSGESEA.

Cys92, Cys97, Cys110, His113, Cys119, His127, His169, and His174 together coordinate Zn(2+).

Belongs to the MOB1/phocein family. As to quaternary structure, binds STRN4. Interacts with DNM1 and EPS15. Interacts with nucleoside diphosphate kinase. Interacts with CTTNBP2. Interacts with CTTNBP2NL. Part of the core of STRIPAK complexes composed of PP2A catalytic and scaffolding subunits, the striatins (PP2A regulatory subunits), the striatin-associated proteins MOB4, STRIP1 and STRIP2, PDCD10 and members of the STE20 kinases, such as STK24 and STK26. Post-translationally, phosphorylated on serine residues. Highly expressed in adrenal gland, spinal cord, brain and cerebellum. Detected at lower levels in heart and skeletal muscle, and at very low levels in spleen, liver and intestine.

Its subcellular location is the cytoplasm. It is found in the membrane. The protein resides in the golgi apparatus. It localises to the golgi stack membrane. Functionally, part of the striatin-interacting phosphatase and kinase (STRIPAK) complexes. STRIPAK complexes have critical roles in protein (de)phosphorylation and are regulators of multiple signaling pathways including Hippo, MAPK, nuclear receptor and cytoskeleton remodeling. Different types of STRIPAK complexes are involved in a variety of biological processes such as cell growth, differentiation, apoptosis, metabolism and immune regulation. The polypeptide is MOB-like protein phocein (Mob4) (Rattus norvegicus (Rat)).